Reading from the N-terminus, the 156-residue chain is Small ribosomal subunit protein uS7 (156 aa).

Belongs to the universal ribosomal protein uS7 family. As to quaternary structure, part of the 30S ribosomal subunit. Contacts proteins S9 and S11.

One of the primary rRNA binding proteins, it binds directly to 16S rRNA where it nucleates assembly of the head domain of the 30S subunit. Is located at the subunit interface close to the decoding center, probably blocks exit of the E-site tRNA. The sequence is that of Small ribosomal subunit protein uS7 from Paraburkholderia phymatum (strain DSM 17167 / CIP 108236 / LMG 21445 / STM815) (Burkholderia phymatum).